A 244-amino-acid polypeptide reads, in one-letter code: Cell division protein ZapD (244 aa).

It belongs to the ZapD family. As to quaternary structure, interacts with FtsZ.

It localises to the cytoplasm. In terms of biological role, cell division factor that enhances FtsZ-ring assembly. Directly interacts with FtsZ and promotes bundling of FtsZ protofilaments, with a reduction in FtsZ GTPase activity. The chain is Cell division protein ZapD from Shewanella baltica (strain OS185).